The sequence spans 299 residues: Small ribosomal subunit protein uS2 (299 aa).

Residues S227–E299 form a disordered region.

The protein belongs to the universal ribosomal protein uS2 family.

In Christiangramia forsetii (strain DSM 17595 / CGMCC 1.15422 / KT0803) (Gramella forsetii), this protein is Small ribosomal subunit protein uS2.